The primary structure comprises 207 residues: Mediator of RNA polymerase II transcription subunit 21 (207 aa).

A disordered region spans residues 36 to 120 (IPPPDVPDAA…APDSPRTFAS (85 aa)). The segment covering 91–108 (GEGAQTPGPAAGAGADPN) has biased composition (low complexity). A coiled-coil region spans residues 146-194 (IDSSEAEQEKRIRELEGELRQVEEERELKMRELKRLRRTLENVLTAVET).

This sequence belongs to the Mediator complex subunit 21 family. In terms of assembly, component of the Mediator complex.

It localises to the nucleus. In terms of biological role, component of the Mediator complex, a coactivator involved in the regulated transcription of nearly all RNA polymerase II-dependent genes. Mediator functions as a bridge to convey information from gene-specific regulatory proteins to the basal RNA polymerase II transcription machinery. Mediator is recruited to promoters by direct interactions with regulatory proteins and serves as a scaffold for the assembly of a functional preinitiation complex with RNA polymerase II and the general transcription factors. The protein is Mediator of RNA polymerase II transcription subunit 21 (srb7) of Aspergillus fumigatus (strain ATCC MYA-4609 / CBS 101355 / FGSC A1100 / Af293) (Neosartorya fumigata).